A 43-amino-acid chain; its full sequence is uncharacterized protein (43 aa).

Polar residues-rich tracts occupy residues 1-19 (MSQK…SGAS) and 33-43 (PENSISKTFSK). Residues 1–43 (MSQKLSFFQQNTRNGSGASRTLVIKPPTIQPKPENSISKTFSK) form a disordered region.

This is an uncharacterized protein from Dictyostelium discoideum (Social amoeba).